A 389-amino-acid chain; its full sequence is MLELLFLLLPVAAAYGWYMGRRSAQQNKQDEANRLSRDYVAGVNFLLSNQQDKAVDLFLDMLKEDTGTVEAHLTLGNLFRSRGEVDRAIRIHQTLMESASLTYEQRLLAIQQLGRDYMAAGLYDRAEDMFNQLTDETDFRIGALQQLLQIYQATSEWQKAIDVAERLVKLGKDKQRVEIAHFYCELALQHMASDDLDRAMTLLKKGAAADKNSARVSIMMGRVFMAKGEYAKAVESLQRVISQDRELVSETLEMLQTCYQQLGKTAEWAEFLQRAVEENTGADAELMLADIIEARDGSEAAQVYITRQLQRHPTMRVFHKLMDYHLNEAEEGRAKESLMVLRDMVGEKVRSKPRYRCQKCGFTAYTLYWHCPSCRAWSTIKPIRGLDGL.

Residues 1-20 form a helical membrane-spanning segment; it reads MLELLFLLLPVAAAYGWYMG. The Cytoplasmic segment spans residues 21–389; it reads RRSAQQNKQD…IKPIRGLDGL (369 aa). 7 TPR repeats span residues 35-68, 69-102, 107-140, 142-174, 180-213, 214-247, and 249-282; these read LSRD…DTGT, VEAH…ASLT, LLAI…TDFR, GALQ…GKDK, AHFY…DKNS, ARVS…DREL, and SETL…NTGA. Fe cation-binding residues include Cys357, Cys360, Cys371, and Cys374.

It belongs to the LapB family.

It localises to the cell inner membrane. In terms of biological role, modulates cellular lipopolysaccharide (LPS) levels by regulating LpxC, which is involved in lipid A biosynthesis. May act by modulating the proteolytic activity of FtsH towards LpxC. May also coordinate assembly of proteins involved in LPS synthesis at the plasma membrane. In Escherichia coli O157:H7, this protein is Lipopolysaccharide assembly protein B.